The following is a 223-amino-acid chain: MDLASLRAQQIELASSVCREDRLDKDPPAFIGGADVGFEQGGEVTRAAMVLLKYPSLELVEYKVARIATTMPYIPGFLSFREYPALLAAWEQLSQKPDLLFVDGHGISHPRRLGVASHFGLLVDVPTIGVAKKRLCGKFEPLSTEPGALSPLMDKGEQLAWVWRSKARCNPLFIATGHRVSTDSALAWVQRCMKGYRLPEPTRWADAVASGRPAFVRWQEIQR.

The Mg(2+) site is built by D35 and D103.

This sequence belongs to the endonuclease V family. Mg(2+) serves as cofactor.

Its subcellular location is the cytoplasm. The enzyme catalyses Endonucleolytic cleavage at apurinic or apyrimidinic sites to products with a 5'-phosphate.. In terms of biological role, DNA repair enzyme involved in the repair of deaminated bases. Selectively cleaves double-stranded DNA at the second phosphodiester bond 3' to a deoxyinosine leaving behind the intact lesion on the nicked DNA. This Salmonella enteritidis PT4 (strain P125109) protein is Endonuclease V.